Consider the following 391-residue polypeptide: ETS-related transcription factor Elf-3 (391 aa).

The 87-residue stretch at 65–151 (DPLAVLHLAE…AQLRDLTSNS (87 aa)) folds into the PNT domain. Positions 200 to 271 (YCSTYGPGAP…HGKRKRGRPR (72 aa)) are disordered. Positions 211 to 229 (PGSSDVSTARTATPQSSHA) are enriched in polar residues. Over residues 242–261 (TESKVFPRDGFPDYKKGEPK) the composition is skewed to basic and acidic residues. A compositionally biased stretch (basic residues) spans 262 to 271 (HGKRKRGRPR). The ETS DNA-binding region spans 293–375 (THLWEFIRDI…DGRRLVYKFG (83 aa)).

It belongs to the ETS family. Interacts with TBP. Interacts with CREBBP and EP300; these act as transcriptional coactivators of ELF3 and positively modulate its function. Interacts with XRCC5/KU86 and XRCC6/KU70; these inhibit the ability of ELF3 to bind DNA and negatively modulate its transcriptional activity. Associated with CLND7 and POU2F3. Interacts with ZNF768. Expressed in small intestine, colon, lung, kidney and uterus. Also expressed in the corneal epithelium and conjunctiva of the developing and adult eye. Not detected in liver, spleen, thymus, brain, heart, skeletal muscle or ovary.

It localises to the cytoplasm. It is found in the nucleus. Its function is as follows. Transcriptional activator that binds and transactivates ETS sequences containing the consensus nucleotide core sequence GGA[AT]. Acts synergistically with POU2F3 to transactivate the SPRR2A promoter and with RUNX1 to transactivate the ANGPT1 promoter. Also transactivates collagenase, CCL20, CLND7, FLG, KRT8, NOS2, PTGS2, SPRR2B, TGFBR2 and TGM3 promoters. Represses KRT4 promoter activity. Involved in mediating vascular inflammation. May play an important role in epithelial cell differentiation and tumorigenesis. May be a critical downstream effector of the ERBB2 signaling pathway. May be associated with mammary gland development and involution. Plays an important role in the regulation of transcription with TATA-less promoters in preimplantation embryos, which is essential in preimplantation development. This Mus musculus (Mouse) protein is ETS-related transcription factor Elf-3.